The chain runs to 94 residues: MANTRSAKKRALVAAKRTARNKMVKSSLRTAIRKFREALGTENAPILLNRAFSALDRAASKGVIHKNTAARKKARLAKALAKATAAQAVAAANE.

It belongs to the bacterial ribosomal protein bS20 family.

Its function is as follows. Binds directly to 16S ribosomal RNA. The chain is Small ribosomal subunit protein bS20 from Symbiobacterium thermophilum (strain DSM 24528 / JCM 14929 / IAM 14863 / T).